We begin with the raw amino-acid sequence, 358 residues long: 3-isopropylmalate dehydrogenase (358 aa).

79 to 92 (GPKWEHLPPDEQPE) is an NAD(+) binding site. Positions 100, 110, 139, and 227 each coordinate substrate. Residues D227, D251, and D255 each coordinate Mg(2+). NAD(+) is bound at residue 285–297 (GSAPDIAGKGVAN).

The protein belongs to the isocitrate and isopropylmalate dehydrogenases family. LeuB type 1 subfamily. In terms of assembly, homodimer. Requires Mg(2+) as cofactor. Mn(2+) serves as cofactor.

It localises to the cytoplasm. It catalyses the reaction (2R,3S)-3-isopropylmalate + NAD(+) = 4-methyl-2-oxopentanoate + CO2 + NADH. It functions in the pathway amino-acid biosynthesis; L-leucine biosynthesis; L-leucine from 3-methyl-2-oxobutanoate: step 3/4. Functionally, catalyzes the oxidation of 3-carboxy-2-hydroxy-4-methylpentanoate (3-isopropylmalate) to 3-carboxy-4-methyl-2-oxopentanoate. The product decarboxylates to 4-methyl-2 oxopentanoate. The chain is 3-isopropylmalate dehydrogenase from Pseudoalteromonas translucida (strain TAC 125).